Consider the following 1031-residue polypeptide: NACHT, LRR and PYD domains-containing protein 3 (1031 aa).

The region spanning 1 to 93 is the Pyrin domain; the sequence is MRMVSVRCKL…YEKAKREEPE (93 aa). Residue Ser5 is modified to Phosphoserine. Tyr13 is modified (phosphotyrosine). Residue Cys125 is the site of S-palmitoyl cysteine attachment. Residues 126–129 are required for binding to phosphatidylinositol 4-phosphate (PtdIns4P); sequence RKKK. 3 positions are modified to phosphotyrosine: Tyr131, Tyr135, and Tyr138. The FISNA domain occupies 135–207; sequence YRKYVRSKFQ…SSVNLELLFD (73 aa). At Ser156 the chain carries Phosphoserine. Thr164 lines the ATP pocket. Phosphoserine is present on residues Ser195 and Ser198. In terms of domain architecture, NACHT spans 217-533; it reads HTVVFQGAAG…EFFAAMYYLL (317 aa). 223–230 lines the ATP pocket; it reads GAAGIGKT. Residues Ser262 and Ser292 each carry the phosphoserine modification. Residue Lys321 forms a Glycyl lysine isopeptide (Lys-Gly) (interchain with G-Cter in ubiquitin) linkage. The residue at position 331 (Ser331) is a Phosphoserine. The KFERQ-like motif 1 motif lies at 352–356; that stretch reads LEKLQ. Lys427 participates in a covalent cross-link: Glycyl lysine isopeptide (Lys-Gly) (interchain with G-Cter in ubiquitin). His519 lines the ATP pocket. Residues 601 to 605 carry the KFERQ-like motif 2 motif; the sequence is KIRLE. Lys687 is covalently cross-linked (Glycyl lysine isopeptide (Lys-Gly) (interchain with G-Cter in ubiquitin)). 2 positions are modified to phosphoserine: Ser723 and Ser730. LRR repeat units lie at residues 737–757, 766–787, 794–814, 823–844, and 851–871; these read NLTE…NVLC, NIRR…NISS, KLVE…RLLC, NLKK…DLAS, and SLTR…GILC. The KFERQ-like motif 3 signature appears at 793-797; the sequence is QKLVE. At Ser801 the chain carries Phosphoserine. 3 S-palmitoyl cysteine lipidation sites follow: Cys832, Cys833, and Cys839. At Tyr856 the chain carries Phosphotyrosine. Residue Lys873 forms a Glycyl lysine isopeptide (Lys-Gly) (interchain with G-Cter in ubiquitin) linkage. LRR repeat units follow at residues 880 to 901, 908 to 929, 937 to 958, and 965 to 986; these read NLQK…ALSS, NLTH…LLCE, KLQV…DLST, and SLRK…LLCE. Residue Cys953 is the site of S-palmitoyl cysteine attachment. Residue Lys968 forms a Glycyl lysine isopeptide (Lys-Gly) (interchain with G-Cter in ubiquitin) linkage. The KFERQ-like motif 4 signature appears at 986–990; sequence EVLKQ. Phosphoserine is present on Ser1030.

This sequence belongs to the NLRP family. As to quaternary structure, sensor component of NLRP3 inflammasomes; inflammasomes are supramolecular complexes that assemble in the cytosol in response to pathogens and other damage-associated signals and play critical roles in innate immunity and inflammation. The core of NLRP3 inflammasomes consists of a signal sensor component (NLRP3), an adapter (PYCARD/ASC), which recruits an effector pro-inflammatory caspase (CASP1 and, possibly, CASP4 and CASP5). Homodecamer; inactive NLRP3 forms homodecameric double-ring cages that hide pyrin domains within NACHT-LRR rings to avoid premature activation. Interacts (via pyrin domain) with PYCARD/ASC (via pyrin domain); interaction is direct. Interacts (via LRR repeat domain) with NEK7 (via N-terminus); the interaction is required for the formation of the complex NLRP3:PYCARD, oligomerization of PYCARD/ASC and activation of CASP1. Interacts (via LRR repeat domain) with NR4A1/Nur77 (via N-terminus); the interaction is direct, requires activation of NR4A1 by its ligands NBRE-containing dsDNA and lipopolysaccharide, and stimulates the association of NLRP3 with NEK7 for non-canonical NLRP3 inflammasome activation. Interacts with CARD8; leading to inhibit formation of the NLRP3 inflammasome. Interacts with MEFV; this interaction targets NLRP3 to degradation by autophagy, hence preventing excessive IL1B- and IL18-mediated inflammation. Interacts with EIF2AK2/PKR; this interaction requires EIF2AK2 activity, is accompanied by EIF2AK2 autophosphorylation and promotes inflammasome assembly in response to specific stimuli. Interacts with GBP5 (via DAPIN domain); this interaction promotes inflammasome assembly in response to microbial and soluble, but not crystalline, agents. Interacts with PML (isoform PML-1) (via the leucine-rich repeat (LRR) domain); PML-mediated increase in NLRP3 inflammasome activation does not depend upon this interaction. Interacts (via NACHT domain) with DHX33 (via DEAH box); NLRP3 activation in presence of cytosolic dsRNA is mediated by DHX33. Interacts (via NACHT and LRR domains) with ARRB2; this interaction is direct and inducible by polyunsaturated fatty acids (PUFAs). Interacts (via NACHT domain) with DDX3X under both LPS-primed and inflammasome-activating conditions. Interacts with IRF4 (via the LRR domain); this interaction is direct and is required for optimal IRF4 binding to IL4 promoter and efficient IL4 transactivation during differentiation of Th2 helper T-cells. Interacts with MAVS; promoting localization to mitochondria and activation of the NLRP3 inflammasome. Interacts with MARK4; promoting localization of NLRP3 to the microtubule organizing center (MTOC). Interacts with TRIM50; this interaction also promotes NLRP3 oligomerization and subsequent inflammasome activation. Interacts with IRGM; preventing NLRP3 inflammasome assembly and promoting NLRP3 degradation. Interacts (via KFERQ-like motifs) with HSPA8/HSC70; promoting NLRP3 degradation by the chaperone-mediated autophagy pathway. Interacts (via NACHT and LLR domains) with ABHD8; this interaction is enhanced in the presence of NLRP3 inflammasome inducers, such as ATP, nigericin, silica, or alum. Interaction with ABHD8 leads the recruitment of ZDHHC12, hence facilitating NLRP3 palmitoylation and degradation by the chaperone-mediated autophagy pathway (CMA), therefore attenuating NLRP3 inflammasome activation. Post-translationally, phosphorylation at Ser-198 by MAPK8/JNK1 increases inflammasome activation by promoting deubiquitination by BRCC3 and NLRP3 homooligomerization. Phosphorylation at Ser-801 by CSNK1A1 prevents inflammasome activation by preventing NEK7 recruitment. Phosphorylation at Ser-5 in the pyrin domain inhibits homomultimerization of NLRP3 and activation of the NLRP3 inflammasome: dephosphorylation by protein phosphatase 2A (PP2A) promotes assembly of the NLRP3 inflammasome. Phosphorylation at Ser-292 by PKD/PRKD1 promotes NLRP3 inflammasome assembly. Phosphorylation by ERK1/MAPK3 promotes NLRP3 inflammasome assembly. Phosphorylation by BTK (at Tyr-131, Tyr-135 and Tyr-138) in the region that mediates binding to phosphatidylinositol phosphate, promotes relocalization of NLRP3 and assembly of the NLRP3 inflammasome. Phosphorylation at Tyr-856 inhibits NLRP3 inflammasome assembly: dephosphorylation by PTPN22 promotes inflammasome activation. Phosphorylated by LATS1 and LATS2 at Ser-262 following palmitoylation by ZDHHC1, promoting its relocalization to the microtubule organizing center (MTOC), where NLRP3 is activated by NEK7, leading to inflammasome assembly and activation. Ubiquitinated; undergoes both 'Lys-48'- and 'Lys-63'-linked polyubiquitination. Ubiquitination does not lead to degradation, but inhibits inflammasome activation. Deubiquitination is catalyzed by BRCC3 and associated with NLRP3 activation and inflammasome assembly. This process can be induced by the activation of Toll-like receptors (by LPS), through a non-transcriptional pathway dependent on the mitochondrial production of reactive oxygen species, and by ATP. Ubiquitinated by TRIM31 via 'Lys-48'-linked ubiquitination, leading to its degradation by the proteasome. Ubiquitinated at Lys-687 by the SCF(FBXL2) complex, leading to its degradation by the proteasome. Ubiquitinated by TRIM35 via 'lys-48' and 'Lys-63'-linked ubiquitination leading to inhibition of NLRP3 inflammasome activation. Undergoes 'Lys-27'-linked polyubiquitination by MARCHF5, leading to NLRP3-NEK7 complex formation and NLRP3 oligomerization. In terms of processing, palmitoylation by ZDHHC12 promotes NLRP3 degradation by the chaperone-mediated autophagy pathway (CMA) and therefore limits NLRP3 inflammasome activation. Interaction with ZDHHC12, and hence NLRP3 palmitoylation, is greatly enhanced by ABHD8. Following palmitoylation, HSPA8/HSC70 recognizes and binds the KFERQ-like motifs on NLRP3 and promotes NLRP3 recruitment to lysosomes, where it is degraded via the chaperone-mediated autophagy pathway in a LAMP2-dependent process. Palmitoylation at Cys-832 and Cys-833 by ZDHHC5 enhances its binding to NEK7 leading to inflammasome assembly and activation. Palmitoylation at Cys-125 and Cys-953 by ZDHHC1 facilitates phosphorylation at Ser-262 by LATS1 and LATS2, promoting its relocalization to the microtubule organizing center (MTOC), where NLRP3 is activated by NEK7, leading to inflammasome assembly and activation. Depalmitoylated by ABHD17A. Post-translationally, degraded via selective autophagy following interaction with IRGM. IRGM promotes NLRP3 recruitment to autophagosome membranes, promoting its SQSTM1/p62-dependent autophagy-dependent degradation.

It is found in the cytoplasm. Its subcellular location is the cytosol. The protein localises to the inflammasome. The protein resides in the cytoskeleton. It localises to the microtubule organizing center. It is found in the golgi apparatus membrane. Its subcellular location is the endoplasmic reticulum. The protein localises to the mitochondrion. The protein resides in the secreted. It localises to the nucleus. It carries out the reaction ATP + H2O = ADP + phosphate + H(+). Its activity is regulated as follows. Under resting conditions, NLRP3 binds ADP and is autoinhibited. Inactive NLRP3 forms homodecameric double-ring cages that hide pyrin domains within NACHT-LRR rings to avoid premature activation. NLRP3 activation stimuli include extracellular ATP, nigericin, reactive oxygen species, crystals of monosodium urate or cholesterol, amyloid-beta fibers, environmental or industrial particles and nanoparticles, such as asbestos, silica, aluminum salts, cytosolic dsRNA, etc. Almost all stimuli trigger intracellular K(+) efflux. These stimuli lead to membrane perturbations that induce activation of NLRP3. Upon activation, NLRP3 is transported to microtubule organizing center (MTOC), where it is unlocked by NEK7, leading to its relocalization to dispersed trans-Golgi network (dTGN) vesicle membranes and recruitment of PYCARD/ASC for the formation of an active inflammasome complex. NEK7-activated NLRP3 forms a disk-shaped inflammasome. NLRP3 and PYCARD/ASC interact via their respective pyrin domains; interaction initiates speck formation (nucleation) which greatly enhances further addition of soluble PYCARD/ASC molecules to the speck in a prion-like polymerization process. Clustered PYCARD/ASC nucleates the formation of CASP1 filaments through the interaction of their respective CARD domains, acting as a platform for CASP1 polymerization and activation. Active CASP1 then processes IL1B and IL18 precursors, leading to the release of mature cytokines in the extracellular milieu and inflammatory response. NLRP3 inflammasome assembly is inhibited by IRGM, which impedes NLRP3 oligomerization. NLRP3 inflammasome is inhibited by cyclic AMP (cAMP), which directly binds NLRP3; inhibition is relieved by calcium-sensing receptor CASR, which inhibits production of cAMP. Specifically inhibited by sulfonylurea MCC950 (also named CP-456,773, CRID3), a potent and specific small-molecule inhibitor of the NLRP3 inflammasome that acts by preventing ATP hydrolysis. In terms of biological role, sensor component of the NLRP3 inflammasome, which mediates inflammasome activation in response to defects in membrane integrity, leading to secretion of inflammatory cytokines IL1B and IL18 and pyroptosis. In response to pathogens and other damage-associated signals that affect the integrity of membranes, initiates the formation of the inflammasome polymeric complex composed of NLRP3, CASP1 and PYCARD/ASC. Recruitment of pro-caspase-1 (proCASP1) to the NLRP3 inflammasome promotes caspase-1 (CASP1) activation, which subsequently cleaves and activates inflammatory cytokines IL1B and IL18 and gasdermin-D (GSDMD), promoting cytokine secretion and pyroptosis. Activation of NLRP3 inflammasome is also required for HMGB1 secretion; stimulating inflammatory responses. Under resting conditions, ADP-bound NLRP3 is autoinhibited. NLRP3 activation stimuli include extracellular ATP, nigericin, reactive oxygen species, crystals of monosodium urate or cholesterol, amyloid-beta fibers, environmental or industrial particles and nanoparticles, such as asbestos, silica, aluminum salts, cytosolic dsRNA, etc. Almost all stimuli trigger intracellular K(+) efflux. These stimuli lead to membrane perturbation and activation of NLRP3. Upon activation, NLRP3 is transported to microtubule organizing center (MTOC), where it is unlocked by NEK7, leading to its relocalization to dispersed trans-Golgi network (dTGN) vesicle membranes and formation of an active inflammasome complex. Associates with dTGN vesicle membranes by binding to phosphatidylinositol 4-phosphate (PtdIns4P). Shows ATPase activity. Functionally, independently of inflammasome activation, regulates the differentiation of T helper 2 (Th2) cells and has a role in Th2 cell-dependent asthma and tumor growth. During Th2 differentiation, required for optimal IRF4 binding to IL4 promoter and for IRF4-dependent IL4 transcription. Binds to the consensus DNA sequence 5'-GRRGGNRGAG-3'. May also participate in the transcription of IL5, IL13, GATA3, CCR3, CCR4 and MAF. This chain is NACHT, LRR and PYD domains-containing protein 3 (NLRP3), found in Bos taurus (Bovine).